The sequence spans 364 residues: Selection and upkeep of intraepithelial T-cells protein 11 (364 aa).

The signal sequence occupies residues 1 to 28 (MEPSASCLPGFFMVCILLKITVLTQVMS). The region spanning 29–118 (LDIQINTQIP…TNQEKRRSII (90 aa)) is the Ig-like V-type domain. The Extracellular segment spans residues 29–138 (LDIQINTQIP…MSLMSNNLLY (110 aa)). C48 and C102 are joined by a disulfide. The helical transmembrane segment at 139–159 (LGIYLIFILFLNFLKGILFCL) threads the bilayer. The Cytoplasmic portion of the chain corresponds to 160–186 (TKRLVHFRKRMIKIKKVWSNKTRACCP). The helical transmembrane segment at 187–207 (LIWEFLEIVLFIAFLPLYLMF) threads the bilayer. Residues 208 to 230 (RIRVFTLDEAHILYNNWLWKVCK) are Extracellular-facing. A helical transmembrane segment spans residues 231-251 (TLIAMMILFTVLILFLLWTLN). Residues 252–364 (RYGKMPCLSS…LYSKLGNLTH (113 aa)) lie on the Cytoplasmic side of the membrane.

The protein belongs to the SKINT family. As to expression, expressed in skin and thymus.

The protein resides in the membrane. Functionally, may act by engaging a cell surface molecule on immature T-cells in the embryonic thymus. In Mus musculus (Mouse), this protein is Selection and upkeep of intraepithelial T-cells protein 11 (Skint11).